The sequence spans 301 residues: UDP-3-O-acyl-N-acetylglucosamine deacetylase (301 aa).

Positions 81, 237, and 241 each coordinate Zn(2+). Catalysis depends on His-264, which acts as the Proton donor.

Belongs to the LpxC family. Zn(2+) is required as a cofactor.

The enzyme catalyses a UDP-3-O-[(3R)-3-hydroxyacyl]-N-acetyl-alpha-D-glucosamine + H2O = a UDP-3-O-[(3R)-3-hydroxyacyl]-alpha-D-glucosamine + acetate. It functions in the pathway glycolipid biosynthesis; lipid IV(A) biosynthesis; lipid IV(A) from (3R)-3-hydroxytetradecanoyl-[acyl-carrier-protein] and UDP-N-acetyl-alpha-D-glucosamine: step 2/6. Its function is as follows. Catalyzes the hydrolysis of UDP-3-O-myristoyl-N-acetylglucosamine to form UDP-3-O-myristoylglucosamine and acetate, the committed step in lipid A biosynthesis. This Leptospira borgpetersenii serovar Hardjo-bovis (strain JB197) protein is UDP-3-O-acyl-N-acetylglucosamine deacetylase.